A 778-amino-acid polypeptide reads, in one-letter code: Dynein axonemal intermediate chain 4 (778 aa).

6 WD repeats span residues H477–I517, L526–D573, R586–E629, A633–G673, S676–T715, and S721–G760.

Part of the multisubunit axonemal dynein complex formed at least of two heavy chains and a number of intermediate and light chains.

Its subcellular location is the cytoplasm. It localises to the cytoskeleton. The protein resides in the flagellum axoneme. It is found in the cilium axoneme. The protein localises to the dynein axonemal particle. Its function is as follows. Plays a critical role in the assembly of axonemal dynein complex. Plays a key role in ciliary motility. This is Dynein axonemal intermediate chain 4 from Danio rerio (Zebrafish).